Consider the following 1084-residue polypeptide: MPPCELISASNGASFQLSDLYFPSFLDLKQFVGETFHISVDDILLLLSYGIILKRSQWDSTKIRSEGLKSIYVFDRKLFNEDIELAVEERFRLFKPLDSPMSDLSEVDRNIVLRNMGWLKALQSDVEFFQLSIEQTRKEVQNMLDCGVVMLEYLKNYCHEVETLYNSHVGFLNKLHEHSASSQWREVYDSVLEAVKIDQQRSLASFFQIDELNQIEAKIRHTDHELNMKLKELKKTIDTCYQHRKTLVSELENIKSISVVSPDCMDKQMTDKFNEMAQELEAASNEWVQNSENNDHISEKVKQMKDSHIPNLQTISQSLFNKASKIIETKTDMQRQLRSLYISVAKSQMDIIEVKSTLTKDMKSDMKLLQTYELQLSQVLDLPMCYGLYLIELYRQQLWMDNYTHIKDQHESALQVMLQEEIHQRKMWYRDFQWISKFLKVDQSLPSTVSITPLKALRRVDLLQINEYFNQLSSAKVSETTLNVLKSKLSQAEMDNMLPELSEQSSNDTGAAIEGYKSRIKKLENLLLDAQFQRYDSWPSGILNKEIAMVQMFRNNTLNNKVQRSSTDDISNSIQQSYSKTLGDVQNLQKAISEYSGLTDTLKEELSTLKSQISNMEVEKNAYKESMANLNKELSNLLINRENFHTEMMERSNDFKKHLALVGEENEQLTKQNQQLSNEIIESQKKYEELNKIKDDLLLNMANQETQAEQERAALQEEIESLKKEVGQLQMAKSSLTESEELLGINKQLEKTLYDVFQGSIFLLESIGLLLSKDIDGKFQIVRVKGLRKDLDSSVIDMNGSLVKSVVSHEIKDTFESIKDSLDYKPHENFISYTEKLFGNQLFEMAVIRRFNDIESLAKKLRKENKNKKILLQKYTNDKITINNFQLGDLALFLPINDQELLLNSSVSSLNSSFSSIDLNSSTQSMIPPRVIPNRVEPASNTNNSNPSSVPEDMGSPNMNRVNTMGNVKVNANIGSNNSNNNYVNTGNANGNNKPETNIDTTSSTNAESPKKQIVWAIFTATNTEVKYILRNTMSNYELLREKEWAVGRITALEKNIVMEGARNPFKFPQNTVWFEVDALFNLS.

Coiled coils occupy residues 585-739 (VQNL…LTES) and 847-879 (VIRRFNDIESLAKKLRKENKNKKILLQKYTNDK). 2 disordered regions span residues 925 to 961 (SMIPPRVIPNRVEPASNTNNSNPSSVPEDMGSPNMNR) and 973 to 1007 (NIGSNNSNNNYVNTGNANGNNKPETNIDTTSSTNA). 2 stretches are compositionally biased toward low complexity: residues 940–949 (SNTNNSNPSS) and 973–993 (NIGSNNSNNNYVNTGNANGNN). Over residues 994-1007 (KPETNIDTTSSTNA) the composition is skewed to polar residues.

The protein belongs to the ATG11 family. As to quaternary structure, homodimer and potential homooligomers. Interacts with ATG1 kinase and the ATG19 and ATG34 cargo protein transporters. Interacts with ATG9, ATG17 and ATG20.

Its subcellular location is the preautophagosomal structure membrane. It localises to the vacuole membrane. In terms of biological role, involved in cytoplasm to vacuole transport (Cvt), pexophagy, mitophagy and nucleophagy. Recruits mitochondria for their selective degradation via autophagy (mitophagy) during starvation, through its interaction with ATG32. Works as scaffold proteins that recruit ATG proteins to the pre-autophagosome (PAS), the site of vesicle/autophagosome formation. Required for ATG9 anterograde transport from the mitochondria to the PAS. Also recruits the ATG19-prAPE1 complex to the PAS. Required for the Cvt vesicles completion. The polypeptide is Autophagy-related protein 11 (Kluyveromyces marxianus (strain DMKU3-1042 / BCC 29191 / NBRC 104275) (Yeast)).